A 729-amino-acid chain; its full sequence is Sorting nexin mvp1 (729 aa).

Disordered stretches follow at residues 1-43 (MSLF…SANL) and 177-340 (PLPK…EEPN). The PX domain occupies 356 to 464 (EETVTVNLLP…VMFLTVPTEL (109 aa)). Residues R392, S394, K418, and R431 each coordinate a 1,2-diacyl-sn-glycero-3-phospho-(1D-myo-inositol-3-phosphate).

This sequence belongs to the sorting nexin family.

The protein localises to the cytoplasm. The protein resides in the membrane. Functionally, required for vacuolar protein sorting. The sequence is that of Sorting nexin mvp1 (mvp1) from Aspergillus fumigatus (strain ATCC MYA-4609 / CBS 101355 / FGSC A1100 / Af293) (Neosartorya fumigata).